A 210-amino-acid chain; its full sequence is Large ribosomal subunit protein uL3 (210 aa).

Residues 121–150 (GGIKRHGFHRGPMAHGSKYHRRPGSLGAKG) form a disordered region.

It belongs to the universal ribosomal protein uL3 family. As to quaternary structure, part of the 50S ribosomal subunit. Forms a cluster with proteins L14 and L19.

Its function is as follows. One of the primary rRNA binding proteins, it binds directly near the 3'-end of the 23S rRNA, where it nucleates assembly of the 50S subunit. The polypeptide is Large ribosomal subunit protein uL3 (Pelotomaculum thermopropionicum (strain DSM 13744 / JCM 10971 / SI)).